A 357-amino-acid chain; its full sequence is Vomeronasal type-1 receptor 5 (357 aa).

Over 1–3 (MLK) the chain is Extracellular. The chain crosses the membrane as a helical span at residues 4-24 (LVIIENMAEIMLFSLDLLLFS). Over 25–52 (TDILCFNFPSKMIKLPGFITIQIFFYPQ) the chain is Cytoplasmic. Residues 53–73 (ASFGISANTILLLFHIFTFVF) traverse the membrane as a helical segment. Residues 74-81 (SHRSKSID) are Extracellular-facing. The helical transmembrane segment at 82–102 (MIISHLSLIHILLLFTQAILV) threads the bilayer. At 103-130 (SLDFFGSQNTQDDLRYKVIVFLNKVMRG) the chain is on the cytoplasmic side. The helical transmembrane segment at 131–151 (LSICTPCLLSVLQAIISPSIF) threads the bilayer. At 152 to 163 (SLAKLKHPSASH) the chain is on the extracellular side. The helical transmembrane segment at 164–184 (ILGFFLFSWVLNMFIGVIFCC) threads the bilayer. At 185 to 269 (TLRLPPVKRG…RVSPVKRASQ (85 aa)) the chain is on the cytoplasmic side. The helical transmembrane segment at 270 to 290 (AILLLVSFVFTYWVDFTFSFS) threads the bilayer. Over 291 to 300 (GGVTWINDSL) the chain is Extracellular. The N-linked (GlcNAc...) asparagine glycan is linked to Asn297. Residues 301–321 (LVWLQVIVANSYAAISPLMLI) form a helical membrane-spanning segment. Residues 322 to 357 (YADNQIFKTLQMLWFKYLSPPKLMLKFNRQCGSTKK) are Cytoplasmic-facing.

This sequence belongs to the G-protein coupled receptor 1 family.

It localises to the cell membrane. Putative pheromone receptor. The polypeptide is Vomeronasal type-1 receptor 5 (VN1R5) (Homo sapiens (Human)).